We begin with the raw amino-acid sequence, 100 residues long: Putative pterin-4-alpha-carbinolamine dehydratase (100 aa).

This sequence belongs to the pterin-4-alpha-carbinolamine dehydratase family.

It carries out the reaction (4aS,6R)-4a-hydroxy-L-erythro-5,6,7,8-tetrahydrobiopterin = (6R)-L-erythro-6,7-dihydrobiopterin + H2O. This is Putative pterin-4-alpha-carbinolamine dehydratase from Rhodopseudomonas palustris (strain ATCC BAA-98 / CGA009).